Consider the following 206-residue polypeptide: MARYLGPKLKLSRREGTDLFLKSGVRAIDSKCKIEQPPGQHGARKPRLSDYGVQLREKQKVRRIYGVLERQFRNYYKEAARLKGNTGENLLQLLEGRLDNVVYRMGFGATRAESRQLVSHKAIMVNGRVVNIASYQVTPNDVVSIREKAKKQSRVRASLELAEQREKPTWLEVDAAKMEGVFKRIPERTDLSADINEHLIVELYSK.

The 62-residue stretch at 96-157 (GRLDNVVYRM…KAKKQSRVRA (62 aa)) folds into the S4 RNA-binding domain.

This sequence belongs to the universal ribosomal protein uS4 family. In terms of assembly, part of the 30S ribosomal subunit. Contacts protein S5. The interaction surface between S4 and S5 is involved in control of translational fidelity.

In terms of biological role, one of the primary rRNA binding proteins, it binds directly to 16S rRNA where it nucleates assembly of the body of the 30S subunit. Its function is as follows. With S5 and S12 plays an important role in translational accuracy. The polypeptide is Small ribosomal subunit protein uS4 (Sodalis glossinidius (strain morsitans)).